A 782-amino-acid chain; its full sequence is MNKKHTLISLAILTALYSQQSLADLHEQCLMGVPKFSGEVVTGDVNALPVYIEADNAEINQPNDATYQGNVDLKQGNRHLLAQSVQVKQSGNQSTPLRMAYVRNGFDYKDNQINMLGKDAEFNLDSHDGNLTNSEYEFVGRQGRGKADNITLHNNYRVMKNATFTSCLHGDNAWAVDASEIRQYVKEEYAEMWHARFKIHGVPVFYTPYLQLPIGDRRRSGLLIPSAGTSSQDGLWYAQPIYWNIAPNYDLTFTPKYMSRRGWQANGEFRYLTSIGEGKVAGEYLGKVRYSEYASDNRKRHLFYWNHNSSFLQNWRLNINYTRVSDKRYFNDFDSIYGRSTDGYANQYARIAYYQPNYNFSLSAHQFQIFDDIVNIGPYRAVPQLDFNYHKYDLANGWLNFKLHSQAVRFDNDSKLMPTAWRFHAEPSLNSLMSNKYGSLNIETKLYATRYEQKKGSGKNAEDVQKTVNRVIPQFKVDLQSVLARDITFLKEYTQTFEPHVQYLYRPYRNQSNIGSTLNNDYLGFGYDSALVQQDYYSLFRDRRYSGLDRISSANQVTLGGTTRFYDIAGEERFNLSAGQIYYLSNSRIDENPANKTPTSSSAWALESNWKISNKWYWRGSYQFDTHTNSTSLANTSLEYNPEKNNLIQLNYRYANQEYIDQNLGKSANAYQQDIQQVGLVVGWEIANNWAVVGRYYQDLALQKPVEQYLGVQYNSCCWAASVGVKRNVTNHQNQTRNEIVYDNSIGITLELRGLGSNDHQSGIQEMLEKGKLPYIRAFSLD.

The signal sequence occupies residues 1 to 23 (MNKKHTLISLAILTALYSQQSLA).

This sequence belongs to the LptD family. Component of the lipopolysaccharide transport and assembly complex. Interacts with LptE and LptA.

The protein resides in the cell outer membrane. Together with LptE, is involved in the assembly of lipopolysaccharide (LPS) at the surface of the outer membrane. The sequence is that of LPS-assembly protein LptD from Haemophilus influenzae (strain ATCC 51907 / DSM 11121 / KW20 / Rd).